Here is a 249-residue protein sequence, read N- to C-terminus: Chitooligosaccharide deacetylase (249 aa).

The Mg(2+) site is built by His-61 and His-125.

It belongs to the YdjC deacetylase family. ChbG subfamily. In terms of assembly, homodimer. Mg(2+) is required as a cofactor.

It is found in the cytoplasm. It catalyses the reaction N,N'-diacetylchitobiose + H2O = N-acetyl-beta-D-glucosaminyl-(1-&gt;4)-D-glucosamine + acetate. It carries out the reaction diacetylchitobiose-6'-phosphate + H2O = N'-monoacetylchitobiose-6'-phosphate + acetate. It participates in glycan degradation; chitin degradation. Involved in the degradation of chitin. ChbG is essential for growth on the acetylated chitooligosaccharides chitobiose and chitotriose but is dispensable for growth on cellobiose and chitosan dimer, the deacetylated form of chitobiose. Deacetylation of chitobiose-6-P and chitotriose-6-P is necessary for both the activation of the chb promoter by the regulatory protein ChbR and the hydrolysis of phosphorylated beta-glucosides by the phospho-beta-glucosidase ChbF. Catalyzes the removal of only one acetyl group from chitobiose-6-P to yield monoacetylchitobiose-6-P, the inducer of ChbR and the substrate of ChbF. The protein is Chitooligosaccharide deacetylase of Escherichia coli (strain K12 / MC4100 / BW2952).